Consider the following 430-residue polypeptide: UDP-N-acetylmuramoylalanine--D-glutamate ligase (430 aa).

109–115 (GTDGKST) lines the ATP pocket.

This sequence belongs to the MurCDEF family.

It localises to the cytoplasm. It catalyses the reaction UDP-N-acetyl-alpha-D-muramoyl-L-alanine + D-glutamate + ATP = UDP-N-acetyl-alpha-D-muramoyl-L-alanyl-D-glutamate + ADP + phosphate + H(+). It participates in cell wall biogenesis; peptidoglycan biosynthesis. In terms of biological role, cell wall formation. Catalyzes the addition of glutamate to the nucleotide precursor UDP-N-acetylmuramoyl-L-alanine (UMA). This is UDP-N-acetylmuramoylalanine--D-glutamate ligase from Thermotoga petrophila (strain ATCC BAA-488 / DSM 13995 / JCM 10881 / RKU-1).